The following is a 111-amino-acid chain: Large ribosomal subunit protein P2B (111 aa).

Residues L62–D111 form a disordered region. Positions S67–A87 are enriched in low complexity. Acidic residues predominate over residues E88–M105. The residue at position 101 (S101) is a Phosphoserine.

This sequence belongs to the eukaryotic ribosomal protein P1/P2 family.

Plays an important role in the elongation step of protein synthesis. The polypeptide is Large ribosomal subunit protein P2B (RPP2B) (Candida albicans (Yeast)).